We begin with the raw amino-acid sequence, 621 residues long: Type 2 DNA topoisomerase 6 subunit B (621 aa).

Residues asparagine 48, aspartate 80, 101–102 (SR), 111–118 (GQQGIGIS), and lysine 435 contribute to the ATP site.

Belongs to the TOP6B family. In terms of assembly, homodimer. Heterotetramer of two Top6A and two Top6B chains.

It carries out the reaction ATP-dependent breakage, passage and rejoining of double-stranded DNA.. Functionally, relaxes both positive and negative superturns and exhibits a strong decatenase activity. This is Type 2 DNA topoisomerase 6 subunit B from Methanosarcina mazei (strain ATCC BAA-159 / DSM 3647 / Goe1 / Go1 / JCM 11833 / OCM 88) (Methanosarcina frisia).